Consider the following 468-residue polypeptide: Sorting and assembly machinery component 50 homolog A (468 aa).

Residues 1–24 are disordered; that stretch reads MGTVHARSLDPLPMNGPDFGSPDD. The POTRA domain maps to 44–124; it reads VVVQRVHFEG…LDVTFEVTEL (81 aa).

This sequence belongs to the SAM50/omp85 family. As to quaternary structure, associates with the mitochondrial contact site and cristae organizing system (MICOS) complex (also known as MINOS or MitOS complex).

It localises to the mitochondrion outer membrane. Its function is as follows. May play a role in the maintenance of the structure of mitochondrial cristae. The sequence is that of Sorting and assembly machinery component 50 homolog A (samm50-a) from Xenopus laevis (African clawed frog).